Here is a 610-residue protein sequence, read N- to C-terminus: Menin (610 aa).

The tract at residues 214–390 (GVAERSWLYL…SLLEAGEERP (177 aa)) is interaction with FANCD2. The interval 460 to 552 (REAEAAEAEE…SPPPEGPVLT (93 aa)) is disordered. The segment covering 484–500 (RRESKPEEPPPPKKPAL) has biased composition (basic and acidic residues). Phosphoserine is present on residues S487 and S543. T594 carries the post-translational modification Phosphothreonine.

As to quaternary structure, component of the MLL-HCF complex, at least composed of KMT2A/MLL1, MEN1, ASH2L, RBBP5, DPY30, WDR5, HCFC1 and HCFC2. Component of the menin-associated histone methyltransferase complex, at least composed of KMT2B/MLL4, MEN1, ASH2L, RBBP5, DPY30 and WDR5. Interacts with POLR2B. Interacts with POLR2A phosphorylated at 'Ser-5', but not with the unphosphorylated, nor 'Ser-2' phosphorylated POLR2A forms. Interacts with FANCD2 and DBF4. Interacts with SMAD3, but not with SMAD2, nor SMAD4. Directly interacts with NFKB1, NFKB2 and RELA. Interacts with JUND (via MBM motif); inhibits the interaction of JUND with MAPK10 and the phosphorylation of JUND by MAP kinases MAPK8 and MAPK10. Interacts with KMT2A (via MBM motif). The KMT2A-MEN1 complex interacts with PSIP1 with a greater affinity as MEN1 enhances interaction of KMT2A with PSIP1. As to expression, widely expressed, including in the pituitary, brain, large intestine, spleen, kidney, adrenal gland, ovary, testis, thymus, lung, epididymis, bone marrow, pancreatic islets and placenta.

It localises to the nucleus. In terms of biological role, essential component of a MLL/SET1 histone methyltransferase (HMT) complex, a complex that specifically methylates 'Lys-4' of histone H3 (H3K4). Functions as a transcriptional regulator. Binds to the TERT promoter and represses telomerase expression. Represses JUND-mediated transcriptional activation on AP1 sites, as well as that mediated by NFKB subunit RELA. Positively regulates HOXC8 and HOXC6 gene expression. May be involved in normal hematopoiesis through the activation of HOXA9 expression. May be involved in DNA repair. Plays a role in TGFB1-mediated inhibition of cell-proliferation, possibly regulating SMAD3 transcriptional activity. This chain is Menin (Men1), found in Rattus norvegicus (Rat).